The chain runs to 373 residues: MIRPDLSSLPAYVPGSTQPGALKLASNESSLSPLPSVSAVINDATSNLNRYPDMASGALRGKLAQWLGVDLDNVAVGNGSSALCQQLVQATCKDGDEVVYAWRSFEAYPILCKIAGAVGVGVPLKSGRHDLKAMSEAIGERTRLVFVCNPNNPTGTTVSRDEFREFMGRVPADVTVVLDEAYVEYNRDAESPVALEELQRYPNLAVCRTFSKAYGLAGLRLGYLVGPAELVEAVNKVGIPFGVNALAQAAGIASVEAQGELAERVDATVAERERVEAYLAGVAPAGADEPLTYPSQANFVWLNAGERAEALDEALKREGVIARCFAGEGVRVTVTTAEETDVLLRALERALPAVGLVEAGAESAGLQASPQAD.

Residue Lys212 is modified to N6-(pyridoxal phosphate)lysine.

The protein belongs to the class-II pyridoxal-phosphate-dependent aminotransferase family. In terms of assembly, homodimer. The cofactor is pyridoxal 5'-phosphate.

The catalysed reaction is an aromatic L-alpha-amino acid + 2-oxoglutarate = an aromatic oxo-acid + L-glutamate. In terms of biological role, aminotransferase that catalyzes the conversion of aromatic amino acids and 2-oxoglutarate into corresponding aromatic oxo acids and L-glutamate. In Corynebacterium jeikeium (strain K411), this protein is Aromatic amino acid aminotransferase.